The primary structure comprises 287 residues: Pyridoxal kinase PdxY (287 aa).

Substrate contacts are provided by residues serine 10 and 45–46 (TQ). ATP contacts are provided by residues aspartate 112, alanine 144, glutamate 149, lysine 182, and 209–212 (RPLV). Residue aspartate 224 coordinates substrate.

This sequence belongs to the pyridoxine kinase family. PdxY subfamily. In terms of assembly, homodimer. It depends on Mg(2+) as a cofactor.

The enzyme catalyses pyridoxal + ATP = pyridoxal 5'-phosphate + ADP + H(+). It functions in the pathway cofactor metabolism; pyridoxal 5'-phosphate salvage; pyridoxal 5'-phosphate from pyridoxal: step 1/1. Functionally, pyridoxal kinase involved in the salvage pathway of pyridoxal 5'-phosphate (PLP). Catalyzes the phosphorylation of pyridoxal to PLP. The chain is Pyridoxal kinase PdxY from Escherichia coli O157:H7.